We begin with the raw amino-acid sequence, 39 residues long: Cytochrome b559 subunit beta (39 aa).

The helical transmembrane segment at 14 to 30 (WLAVHGLAVPTVFFLGS) threads the bilayer. His18 provides a ligand contact to heme.

This sequence belongs to the PsbE/PsbF family. In terms of assembly, heterodimer of an alpha subunit and a beta subunit. PSII is composed of 1 copy each of membrane proteins PsbA, PsbB, PsbC, PsbD, PsbE, PsbF, PsbH, PsbI, PsbJ, PsbK, PsbL, PsbM, PsbT, PsbX, PsbY, PsbZ, Psb30/Ycf12, at least 3 peripheral proteins of the oxygen-evolving complex and a large number of cofactors. It forms dimeric complexes. The cofactor is heme b.

Its subcellular location is the plastid membrane. Its function is as follows. This b-type cytochrome is tightly associated with the reaction center of photosystem II (PSII). PSII is a light-driven water:plastoquinone oxidoreductase that uses light energy to abstract electrons from H(2)O, generating O(2) and a proton gradient subsequently used for ATP formation. It consists of a core antenna complex that captures photons, and an electron transfer chain that converts photonic excitation into a charge separation. This is Cytochrome b559 subunit beta from Cuscuta europaea (European dodder).